We begin with the raw amino-acid sequence, 377 residues long: UPF0754 membrane protein GTNG_0550 (377 aa).

2 consecutive transmembrane segments (helical) span residues 7–27 (LLFMMAVGALIGGMTNFIAIV) and 357–377 (YLGALLGAMIGAVQGIIGLWL).

This sequence belongs to the UPF0754 family.

It localises to the cell membrane. The sequence is that of UPF0754 membrane protein GTNG_0550 from Geobacillus thermodenitrificans (strain NG80-2).